We begin with the raw amino-acid sequence, 213 residues long: Large ribosomal subunit protein uL3 (213 aa).

It belongs to the universal ribosomal protein uL3 family. Part of the 50S ribosomal subunit. Forms a cluster with proteins L14 and L19.

In terms of biological role, one of the primary rRNA binding proteins, it binds directly near the 3'-end of the 23S rRNA, where it nucleates assembly of the 50S subunit. The protein is Large ribosomal subunit protein uL3 of Bifidobacterium longum subsp. infantis (strain ATCC 15697 / DSM 20088 / JCM 1222 / NCTC 11817 / S12).